Reading from the N-terminus, the 349-residue chain is Phosphoribosylformylglycinamidine cyclo-ligase (349 aa).

The protein belongs to the AIR synthase family.

The protein localises to the cytoplasm. The catalysed reaction is 2-formamido-N(1)-(5-O-phospho-beta-D-ribosyl)acetamidine + ATP = 5-amino-1-(5-phospho-beta-D-ribosyl)imidazole + ADP + phosphate + H(+). The protein operates within purine metabolism; IMP biosynthesis via de novo pathway; 5-amino-1-(5-phospho-D-ribosyl)imidazole from N(2)-formyl-N(1)-(5-phospho-D-ribosyl)glycinamide: step 2/2. The protein is Phosphoribosylformylglycinamidine cyclo-ligase of Lactobacillus delbrueckii subsp. bulgaricus (strain ATCC 11842 / DSM 20081 / BCRC 10696 / JCM 1002 / NBRC 13953 / NCIMB 11778 / NCTC 12712 / WDCM 00102 / Lb 14).